We begin with the raw amino-acid sequence, 242 residues long: ATP-dependent dethiobiotin synthetase BioD (242 aa).

12 to 17 lines the ATP pocket; the sequence is EVGKTV. Thr16 is a binding site for Mg(2+). The active site involves Lys37. A substrate-binding site is contributed by Ser41. Residues Asp51 and 112–115 each bind ATP; that span reads EGAG. Positions 51 and 112 each coordinate Mg(2+).

This sequence belongs to the dethiobiotin synthetase family. As to quaternary structure, homodimer. The cofactor is Mg(2+).

The protein localises to the cytoplasm. It carries out the reaction (7R,8S)-7,8-diammoniononanoate + CO2 + ATP = (4R,5S)-dethiobiotin + ADP + phosphate + 3 H(+). The protein operates within cofactor biosynthesis; biotin biosynthesis; biotin from 7,8-diaminononanoate: step 1/2. Its function is as follows. Catalyzes a mechanistically unusual reaction, the ATP-dependent insertion of CO2 between the N7 and N8 nitrogen atoms of 7,8-diaminopelargonic acid (DAPA, also called 7,8-diammoniononanoate) to form a ureido ring. In Bacillus cereus (strain G9842), this protein is ATP-dependent dethiobiotin synthetase BioD.